The following is a 266-amino-acid chain: GTP cyclohydrolase FolE2 (266 aa).

This sequence belongs to the GTP cyclohydrolase IV family.

It catalyses the reaction GTP + H2O = 7,8-dihydroneopterin 3'-triphosphate + formate + H(+). It functions in the pathway cofactor biosynthesis; 7,8-dihydroneopterin triphosphate biosynthesis; 7,8-dihydroneopterin triphosphate from GTP: step 1/1. In terms of biological role, converts GTP to 7,8-dihydroneopterin triphosphate. The polypeptide is GTP cyclohydrolase FolE2 (Burkholderia mallei (strain ATCC 23344)).